The primary structure comprises 436 residues: MEKTSFSHDTNKVFLIAGMQWGDEGKGKAVVTFSEKVDIVAKYNGGHNAGHEIILNGQQYKLHLIPGGVMHPHVINVLGHGMVIHLESLLKEMEILTQHGIEVLERLRISDRAHILLNAHVDIDRKMEHRRMSGGGKIGTTLRGIGPCYSTKSARTGIRMGDLLHWEHFSKKVRDFYKIHCDFENFEELAQEEVENHKKLYDIFAKCICDTGYFMSESIKAGKKILLEGSNGSLLDIDMGTYPFVTSSTTLACGAYLGLGVPLNAPIYRIGILKCYQTRVGMGPFPTEFFDDNYTHIQKDGTEIGVSTARVRRCGWLDLVAARYIQRLNCFNSIYFTKMDVLTGLKEIKICIDYRNKVDGTILERGRFPSTIASLEEYEPVYQSFAGWDQDISQISEYNELPETARKYIEFVEKEVGAHFQWVGVGQDVKSIIVRS.

Residues 22–28 (GDEGKGK) and 50–52 (GHE) each bind GTP. The Proton acceptor role is filled by Asp23. 2 residues coordinate Mg(2+): Asp23 and Gly50. IMP is bound by residues 23 to 26 (DEGK), 48 to 51 (NAGH), Thr141, Arg155, Asn231, Thr246, and Arg310. Catalysis depends on His51, which acts as the Proton donor. Position 306-312 (306-312 (VSTARVR)) interacts with substrate. GTP-binding positions include Arg312, 338-340 (KMD), and 424-426 (GVG).

It belongs to the adenylosuccinate synthetase family. Homodimer. The cofactor is Mg(2+).

The protein localises to the cytoplasm. The catalysed reaction is IMP + L-aspartate + GTP = N(6)-(1,2-dicarboxyethyl)-AMP + GDP + phosphate + 2 H(+). It participates in purine metabolism; AMP biosynthesis via de novo pathway; AMP from IMP: step 1/2. Functionally, plays an important role in the salvage pathway for purine nucleotide biosynthesis. Catalyzes the first committed step in the biosynthesis of AMP from IMP. The polypeptide is Adenylosuccinate synthetase (Babesia bovis).